Consider the following 994-residue polypeptide: Chromatin modification-related protein vid21 (994 aa).

2 disordered regions span residues P122–V275 and P288–V308. 5 stretches are compositionally biased toward basic and acidic residues: residues T158–I171, K178–G191, L204–E233, V254–S265, and P288–E305. A phosphoserine mark is found at S298 and S378. The HSA domain occupies P475–E548. Residues S671 to N693 are disordered. The span at F672–N693 shows a compositional bias: basic and acidic residues. One can recognise a Myb-like domain in the interval K713–D773. Disordered regions lie at residues T857–L880 and E975–Q994. Positions L880 to L912 form a coiled coil.

The protein belongs to the EAF1 family. As to quaternary structure, component of the NuA4 histone acetyltransferase complex.

The protein resides in the nucleus. Component of the NuA4 histone acetyltransferase complex which is involved in transcriptional activation of selected genes principally by acetylation of nucleosomal histone H4 and H2A. The NuA4 complex is also involved in DNA repair. The sequence is that of Chromatin modification-related protein vid21 (vid21) from Schizosaccharomyces pombe (strain 972 / ATCC 24843) (Fission yeast).